A 473-amino-acid polypeptide reads, in one-letter code: ATP synthase subunit beta (473 aa).

158-165 (GGAGVGKT) is an ATP binding site.

It belongs to the ATPase alpha/beta chains family. In terms of assembly, F-type ATPases have 2 components, CF(1) - the catalytic core - and CF(0) - the membrane proton channel. CF(1) has five subunits: alpha(3), beta(3), gamma(1), delta(1), epsilon(1). CF(0) has three main subunits: a(1), b(2) and c(9-12). The alpha and beta chains form an alternating ring which encloses part of the gamma chain. CF(1) is attached to CF(0) by a central stalk formed by the gamma and epsilon chains, while a peripheral stalk is formed by the delta and b chains.

The protein resides in the cell membrane. The enzyme catalyses ATP + H2O + 4 H(+)(in) = ADP + phosphate + 5 H(+)(out). Produces ATP from ADP in the presence of a proton gradient across the membrane. The catalytic sites are hosted primarily by the beta subunits. This Anoxybacillus flavithermus (strain DSM 21510 / WK1) protein is ATP synthase subunit beta.